We begin with the raw amino-acid sequence, 348 residues long: A-type ATP synthase subunit C (348 aa).

The protein belongs to the V-ATPase V0D/AC39 subunit family. Has multiple subunits with at least A(3), B(3), C, D, E, F, H, I and proteolipid K(x).

Its subcellular location is the cell membrane. Functionally, component of the A-type ATP synthase that produces ATP from ADP in the presence of a proton gradient across the membrane. This chain is A-type ATP synthase subunit C, found in Haloferax volcanii (strain ATCC 29605 / DSM 3757 / JCM 8879 / NBRC 14742 / NCIMB 2012 / VKM B-1768 / DS2) (Halobacterium volcanii).